A 311-amino-acid polypeptide reads, in one-letter code: HPr kinase/phosphorylase (311 aa).

Active-site residues include His-139 and Lys-160. 154-161 (GASGVGKS) provides a ligand contact to ATP. Ser-161 is a Mg(2+) binding site. The Proton acceptor; for phosphorylation activity. Proton donor; for dephosphorylation activity role is filled by Asp-178. The segment at 202-211 (LEIRGIGIID) is important for the catalytic mechanism of both phosphorylation and dephosphorylation. Glu-203 is a binding site for Mg(2+). Arg-244 is an active-site residue. Residues 265 to 270 (PVRPGR) form an important for the catalytic mechanism of dephosphorylation region.

It belongs to the HPrK/P family. Homohexamer. Requires Mg(2+) as cofactor.

It carries out the reaction [HPr protein]-L-serine + ATP = [HPr protein]-O-phospho-L-serine + ADP + H(+). It catalyses the reaction [HPr protein]-O-phospho-L-serine + phosphate + H(+) = [HPr protein]-L-serine + diphosphate. In terms of biological role, catalyzes the ATP- as well as the pyrophosphate-dependent phosphorylation of a specific serine residue in HPr, a phosphocarrier protein of the phosphoenolpyruvate-dependent sugar phosphotransferase system (PTS). HprK/P also catalyzes the pyrophosphate-producing, inorganic phosphate-dependent dephosphorylation (phosphorolysis) of seryl-phosphorylated HPr (P-Ser-HPr). The two antagonistic activities of HprK/P are regulated by several intracellular metabolites, which change their concentration in response to the absence or presence of rapidly metabolisable carbon sources (glucose, fructose, etc.) in the growth medium. Therefore, by controlling the phosphorylation state of HPr, HPrK/P is a sensor enzyme that plays a major role in the regulation of carbon metabolism and sugar transport: it mediates carbon catabolite repression (CCR), and regulates PTS-catalyzed carbohydrate uptake and inducer exclusion. The chain is HPr kinase/phosphorylase from Exiguobacterium sibiricum (strain DSM 17290 / CCUG 55495 / CIP 109462 / JCM 13490 / 255-15).